The following is a 443-amino-acid chain: Serine transporter (443 aa).

11 consecutive transmembrane segments (helical) span residues 38 to 60 (TGWV…PVQV), 65 to 87 (LWVF…RLFI), 111 to 131 (WGIL…FVYS), 150 to 170 (GLLS…VAIS), 183 to 203 (GMVL…VGMW), 215 to 235 (GLLV…ILFI), 265 to 285 (IAFG…TLAM), 319 to 339 (VSVI…YLGF), 368 to 388 (GIMI…APVL), 390 to 410 (FTSI…AWLV), and 422 to 442 (MSLY…FLAF).

It belongs to the amino acid/polyamine transporter 2 family. SdaC/TdcC subfamily.

It is found in the cell inner membrane. In terms of biological role, transports both D- and L-serine; allows growth of strain CFT073 cells normally unable to transport D-serine on that substrate. Transport relies on the H(+) gradient and is not competed by L-threonine. May play a role in L-cysteine detoxification. This chain is Serine transporter, found in Escherichia coli O157:H7.